The chain runs to 90 residues: Co-chaperonin GroES (90 aa).

This sequence belongs to the GroES chaperonin family. As to quaternary structure, heptamer of 7 subunits arranged in a ring. Interacts with the chaperonin GroEL.

The protein localises to the cytoplasm. Functionally, together with the chaperonin GroEL, plays an essential role in assisting protein folding. The GroEL-GroES system forms a nano-cage that allows encapsulation of the non-native substrate proteins and provides a physical environment optimized to promote and accelerate protein folding. GroES binds to the apical surface of the GroEL ring, thereby capping the opening of the GroEL channel. The chain is Co-chaperonin GroES from Fusobacterium nucleatum subsp. polymorphum (Fusobacterium polymorphum).